Consider the following 299-residue polypeptide: Probable lipid kinase YegS-like (299 aa).

The 129-residue stretch at 1–129 folds into the DAGKc domain; that stretch reads MSERKALLIL…IDLGEVGGQM (129 aa). ATP-binding positions include T39, 65–71, and T92; that span reads GDGTLRD. Mg(2+) is bound by residues L210, D213, and L215. E268 (proton acceptor) is an active-site residue.

It belongs to the diacylglycerol/lipid kinase family. YegS lipid kinase subfamily. It depends on Mg(2+) as a cofactor. Requires Ca(2+) as cofactor.

It localises to the cytoplasm. Probably phosphorylates lipids; the in vivo substrate is unknown. This chain is Probable lipid kinase YegS-like, found in Pseudomonas fluorescens (strain ATCC BAA-477 / NRRL B-23932 / Pf-5).